The primary structure comprises 772 residues: General transcription and DNA repair factor IIH helicase subunit XPD (772 aa).

The region spanning 7–283 (DLPILFPYPR…QSDSKKLQDE (277 aa)) is the Helicase ATP-binding domain. Position 42–49 (42–49 (MPSGTGKT)) interacts with ATP. [4Fe-4S] cluster contacts are provided by cysteine 115, cysteine 133, cysteine 154, and cysteine 189. Positions 233 to 236 (DEAH) match the DEAH box motif.

It belongs to the helicase family. RAD3/XPD subfamily. In terms of assembly, component of the 7-subunit TFIIH core complex composed of XPB/ptr8, XPD/rad15, ssl1, tfb1, tfb2, tfb4 and tfb5, which is active in NER. The core complex associates with the 3-subunit CTD-kinase module TFIIK composed of mcs2/cyclin H, mcs6/cdk7 and pmh1/tfb3 to form the 10-subunit holoenzyme (holo-TFIIH) active in transcription. It depends on [4Fe-4S] cluster as a cofactor.

Its subcellular location is the nucleus. It carries out the reaction Couples ATP hydrolysis with the unwinding of duplex DNA at the replication fork by translocating in the 5'-3' direction. This creates two antiparallel DNA single strands (ssDNA). The leading ssDNA polymer is the template for DNA polymerase III holoenzyme which synthesizes a continuous strand.. The catalysed reaction is ATP + H2O = ADP + phosphate + H(+). ATP-dependent 5'-3' DNA helicase, component of the general transcription and DNA repair factor IIH (TFIIH) core complex, which is involved in general and transcription-coupled nucleotide excision repair (NER) of damaged DNA and, when complexed to TFIIK, in RNA transcription by RNA polymerase II. In NER, TFIIH acts by opening DNA around the lesion to allow the excision of the damaged oligonucleotide and its replacement by a new DNA fragment. The ATP-dependent helicase activity of XPD/rad15 is required for DNA opening. In transcription, TFIIH has an essential role in transcription initiation. When the pre-initiation complex (PIC) has been established, TFIIH is required for promoter opening and promoter escape. Phosphorylation of the C-terminal tail (CTD) of the largest subunit of RNA polymerase II by the kinase module TFIIK controls the initiation of transcription. XPD/rad15 acts by forming a bridge between TFIIK and the core-TFIIH complex. Involved in the maintenance of the fidelity of DNA replication. The protein is General transcription and DNA repair factor IIH helicase subunit XPD of Schizosaccharomyces pombe (strain 972 / ATCC 24843) (Fission yeast).